Consider the following 203-residue polypeptide: Phospho-2-dehydro-3-deoxyheptonate aldolase (203 aa).

The segment covering 1-10 has biased composition (basic and acidic residues); it reads MIDRLVRDSR. Positions 1 to 28 are disordered; the sequence is MIDRLVRDSRGPVTERNPPHMSLSAGPA.

The protein belongs to the class-I DAHP synthase family.

The enzyme catalyses D-erythrose 4-phosphate + phosphoenolpyruvate + H2O = 7-phospho-2-dehydro-3-deoxy-D-arabino-heptonate + phosphate. It functions in the pathway metabolic intermediate biosynthesis; chorismate biosynthesis; chorismate from D-erythrose 4-phosphate and phosphoenolpyruvate: step 1/7. Functionally, stereospecific condensation of phosphoenolpyruvate (PEP) and D-erythrose-4-phosphate (E4P) giving rise to 3-deoxy-D-arabino-heptulosonate-7-phosphate (DAHP). This chain is Phospho-2-dehydro-3-deoxyheptonate aldolase (aroA), found in Amycolatopsis methanolica.